Here is a 310-residue protein sequence, read N- to C-terminus: Transcription initiation factor IIB (310 aa).

Residues 9-41 (EKETKCPECGSDDLRGDYERAEIVCGKCGLVID) form a TFIIB-type zinc finger. 4 residues coordinate Zn(2+): cysteine 14, cysteine 17, cysteine 33, and cysteine 36. Repeat copies occupy residues 127–210 (SELD…TREL) and 221–302 (DYVP…ELTE).

This sequence belongs to the TFIIB family.

Functionally, stabilizes TBP binding to an archaeal box-A promoter. Also responsible for recruiting RNA polymerase II to the pre-initiation complex (DNA-TBP-TFIIB). In Methanothermobacter thermautotrophicus (strain ATCC 29096 / DSM 1053 / JCM 10044 / NBRC 100330 / Delta H) (Methanobacterium thermoautotrophicum), this protein is Transcription initiation factor IIB.